The primary structure comprises 356 residues: tRNA N6-adenosine threonylcarbamoyltransferase (356 aa).

Residues H122, H126, and Y143 each coordinate a divalent metal cation. Residues 143 to 147, D175, G190, E194, and N287 each bind substrate; that span reads YVSGG. D315 serves as a coordination point for a divalent metal cation.

It belongs to the KAE1 / TsaD family. As to quaternary structure, component of the EKC/KEOPS complex composed of at least BUD32, CGI121, GON7, KAE1 and PCC1; the whole complex dimerizes. A divalent metal cation serves as cofactor.

Its subcellular location is the cytoplasm. It localises to the nucleus. The enzyme catalyses L-threonylcarbamoyladenylate + adenosine(37) in tRNA = N(6)-L-threonylcarbamoyladenosine(37) in tRNA + AMP + H(+). Its function is as follows. Component of the EKC/KEOPS complex that is required for the formation of a threonylcarbamoyl group on adenosine at position 37 (t(6)A37) in tRNAs that read codons beginning with adenine. The complex is probably involved in the transfer of the threonylcarbamoyl moiety of threonylcarbamoyl-AMP (TC-AMP) to the N6 group of A37. KAE1 likely plays a direct catalytic role in this reaction, but requires other protein(s) of the complex to fulfill this activity. The EKC/KEOPS complex also promotes both telomere uncapping and telomere elongation. The complex is required for efficient recruitment of transcriptional coactivators. The sequence is that of tRNA N6-adenosine threonylcarbamoyltransferase from Chaetomium globosum (strain ATCC 6205 / CBS 148.51 / DSM 1962 / NBRC 6347 / NRRL 1970) (Soil fungus).